The chain runs to 394 residues: Elongation factor Tu 1 (394 aa).

Residues 10–204 form the tr-type G domain; the sequence is KPHVNVGTIG…ALDSYIPEPQ (195 aa). A G1 region spans residues 19 to 26; that stretch reads GHVDHGKT. A GTP-binding site is contributed by 19–26; the sequence is GHVDHGKT. Thr-26 provides a ligand contact to Mg(2+). A G2 region spans residues 60–64; sequence GITIS. The interval 81-84 is G3; sequence DCPG. GTP contacts are provided by residues 81 to 85 and 136 to 139; these read DCPGH and NKCD. The segment at 136–139 is G4; that stretch reads NKCD. Residues 174 to 176 are G5; that stretch reads SAL.

This sequence belongs to the TRAFAC class translation factor GTPase superfamily. Classic translation factor GTPase family. EF-Tu/EF-1A subfamily. In terms of assembly, monomer.

The protein localises to the cytoplasm. It carries out the reaction GTP + H2O = GDP + phosphate + H(+). Its function is as follows. GTP hydrolase that promotes the GTP-dependent binding of aminoacyl-tRNA to the A-site of ribosomes during protein biosynthesis. This Pseudoalteromonas translucida (strain TAC 125) protein is Elongation factor Tu 1.